The primary structure comprises 313 residues: LUC7-related splicing factor homolog (313 aa).

The tract at residues 237–313 is disordered; it reads RKEREEKLGS…RDRRDRDRRY (77 aa).

It belongs to the Luc7 family.

The sequence is that of LUC7-related splicing factor homolog from Caenorhabditis elegans.